The following is a 1872-amino-acid chain: MFSRRSHGDVKKSTQKVLDPKKDVLTRLKHLRALLDNVDASDLKQFFETNYSQIYFIFYENFITLENSLKLKGNNKSQREELDSILFLFEKILQFLPERIFFRWHYQSIGSTLKKLLHTGNSIKIRCEGIRLFLLWLQALQTNCAEEQVLIFACLVPGFPAVLSSRGPCTLETLINPSPSVVDAKIYPEEITPLLPAVSGEKIAEDQTCFFLQILLKYMVIQAASLEWKNKENQDTGFKFLFTLFRKYYLPHLFPSFTKLTNIYKPVLEIPHLRPKPLYVTVTRDNETIYSTKIPYMAARVVFIKWIVTFFLEKKYLTATQNTKNGVDVLPKIIQTVGGGAIQEKVPELDGAGATEQDKSHSNSSTLSDRRLSNSSLCSIEEEHRTVYEMVQRILLSTRGYVNFVNEVFRQAFLLPSCEISITRKVVQVYRKWILQNKPVFMEEPDKKDVAEEDADKLGLSETDSKEVSSESSGHKRSSSWGRTYSFTSAMSRGCVTEEDNTNVKAGAQAMLQVFLTNAANVFLLEPCVEVPMLLREQVDACKAVLIIFRRMIMELTMNQKTWEQMLQILLRITEAVMQKPKDKLVQDSFARSLAGLLFRTLIVAWIRANLCVYISRELWDDFLRVLSSLTEWEELITEWSNIMDSLTAVLARTVYGVEMTNLPLDKLSEQKEKKQRGKGCVLEPQKGTAVGRSFSLSWRSHPDVTEPMRFRSATTSGAPGVEKARNTVRQKATEVEEFQQAESTAAADCDYLVVGQQPVPRSSSTSDITERLYSDSSQGQKVENSQNLSSSEPKSVQESKGHVTHEHEGVTILVRRSSSPAELDLKEESQQTHGRCRERQKSESTGSDMAVGYSNEAELPVSPWQTCEEDPELSTPTDAVADSDARHWLQLSPTDASNLTESRECLADDCSIIAGGNLTGWHPDSAAVLWRRVLGILGDVNNIQSPKIHAKVFSYLYELWYKLAKIRDNLAISLDNQSSPSPPLLIPPLRMFASWLFKATTLPNEYKEGKLQAYKLICAMMTRRQDVLPNSDFLVHFYLVMHLGLTSEDQDVLNTIIKNCSPRFFSLGLPGFSMLVGDFITAAARVLSTDMLAAPRSEALTLLGSLVCFPNTYQEIPLLQSVPEVSDVVTGAEDVKHYLINILLKNATEEPNECARCIAICSLGVWICEELAQCASHPQVKDAINVIGVTLKFPNKIVAQVACDVLQLLVSYWEKLQMFETALPRKMAEILVATIAFLLPSAEYSSVETDKKFIVSLLLCLLDWCMALPVSALLHPVSTAVIEELHPSRAPLLDYIYRVLHCCVCGSSTYTQQSHYTLTLADLSSTDYDPFLPLANVRNSEPVQYHSSADLGNLLTVEEEKKRRSVELIPLTARMVMAHLVNHLGHYPLSGGPAVLHSLVSENHDNAHVEGTELSSEVFRSPNLQLFVFNDSTLISYLQTPAEGPAGGTSGGSLSDVRVIVRDISGKYSWDGKVLYGPLEGRLAPSGRNPSFQISGWHHHTCGPQSNLFHGEEGDDVLDKLLENIGHTSPECLLPSQLNLNEPSPTPSAMNCDQEKEIIEVILRQSTQEDEYVQRCHSNSAVKVTSQGQPSPVEPRGPFYFCRLLLDDLGMNSWDRRKNFHLLKKNSKLLRELKNLDSRQCRETHKIAVFYIAEGQEDKCSILANERGSQAYEDFVAGLGWEVDLSTHCGFMGGLQRNGSTGQTAPYYATSTVEVIFHVSTRMPSDSDDSLTKKLRHLGNDEVHIVWSEHSRDYRRGIIPTAFGDVSIIIYPMKNHMFFITITKKPEVPFFGPLFDGAIVSGKLLPSLICATCINASRAVKCLIPLYQSFYEERALYLEAIIQNHREVMTFEDFAAQVFSPSPSYSLSGTD.

3 positions are modified to phosphoserine: S373, S376, and S379. The span at 446-469 (DKKDVAEEDADKLGLSETDSKEVS) shows a compositional bias: basic and acidic residues. Positions 446–481 (DKKDVAEEDADKLGLSETDSKEVSSESSGHKRSSSW) are disordered. Phosphoserine is present on residues S486 and S696. Disordered regions lie at residues 711–730 (FRSA…NTVR) and 758–849 (QPVP…TGSD). T715 carries the post-translational modification Phosphothreonine; by PKB. A compositionally biased stretch (polar residues) spans 775 to 795 (SDSSQGQKVENSQNLSSSEPK). Positions 796–810 (SVQESKGHVTHEHEG) are enriched in basic and acidic residues. A phosphoserine mark is found at S819 and S820. Residues 824-843 (LDLKEESQQTHGRCRERQKS) show a composition bias toward basic and acidic residues. Residue S1592 is modified to Phosphoserine. The Rap-GAP domain maps to 1634–1842 (LKNLDSRQCR…EERALYLEAI (209 aa)).

Component of the heterodimeric RalGAP2 complex with RALGAPB. Heterodimerization is required for activity. As to expression, highly expressed in lung, liver, testis and thymus with lower levels in brain and heart (at protein level).

It localises to the cytoplasm. Catalytic subunit of the heterodimeric RalGAP2 complex which acts as a GTPase activator for the Ras-like small GTPases RALA and RALB. This is Ral GTPase-activating protein subunit alpha-2 from Rattus norvegicus (Rat).